The chain runs to 319 residues: Pre T-cell antigen receptor alpha (319 aa).

An N-terminal signal peptide occupies residues 1–16; that stretch reads MAESWLLLLLALGCPA. Residues 17-160 lie on the Extracellular side of the membrane; sequence LPTEVTTLLR…LRGTRALVLR (144 aa). Cys58 and Cys118 are disulfide-bonded. A glycan (N-linked (GlcNAc...) asparagine) is linked at Asn78. Residues 161–181 traverse the membrane as a helical segment; sequence LGALRLLLFKLLLLDVLLTCG. Residues 182–319 lie on the Cytoplasmic side of the membrane; that stretch reads RLHAPPAARG…PPADPSFPGG (138 aa). Residues 189-207 are compositionally biased toward low complexity; sequence ARGDPAGASGPGAPSLPAP. Positions 189-293 are disordered; that stretch reads ARGDPAGASG…VLRAWSSGPS (105 aa). The segment covering 260–271 has biased composition (basic residues); that stretch reads RRRRVHTRRPRR.

In terms of assembly, heterodimer with TCRB; disulfide linked. This heterodimer assembles with CD3 proteins into a signaling-competent pre-T-cell receptor complex. Interacts with RHBDD1.

It is found in the membrane. The protein localises to the cell membrane. Its function is as follows. Component of the pre-T-cell receptor complex (composed of PTCRA, TCRB and the CD3 complex) that has a crucial role in early T-cell development, particularly alpha-beta T cell differentiation. In Bos taurus (Bovine), this protein is Pre T-cell antigen receptor alpha (PTCRA).